The following is a 210-amino-acid chain: dTTP/UTP pyrophosphatase (210 aa).

The active-site Proton acceptor is Asp89.

It belongs to the Maf family. YhdE subfamily. A divalent metal cation serves as cofactor.

It is found in the cytoplasm. The enzyme catalyses dTTP + H2O = dTMP + diphosphate + H(+). The catalysed reaction is UTP + H2O = UMP + diphosphate + H(+). Nucleoside triphosphate pyrophosphatase that hydrolyzes dTTP and UTP. May have a dual role in cell division arrest and in preventing the incorporation of modified nucleotides into cellular nucleic acids. In Burkholderia orbicola (strain AU 1054), this protein is dTTP/UTP pyrophosphatase.